Consider the following 835-residue polypeptide: Axin-1 (835 aa).

A disordered region spans residues L16–A60. A compositionally biased stretch (polar residues) spans D40–S53. The RGS domain occupies S92–T214. Residues A318–Y349 form a disordered region. Positions S328 to D344 are enriched in low complexity. The tract at residues Y351–L436 is interaction with GSK3B. The interval A437–I512 is interaction with beta-catenin. Disordered regions lie at residues K485 to Q530 and G602 to R627. Positions R616–R627 are enriched in basic and acidic residues. Residues C753 to D835 form the DIX domain.

As to quaternary structure, homodimer. Interacts with dixdc1. Interacts with hwa; leading to promote the tankyrase-mediated degradation of axin1. In terms of processing, ADP-ribosylated by tankyrase tnks and tnks2. Poly-ADP-ribosylated protein is recognized by rnf146, followed by ubiquitination at 'Lys-48' and subsequent activation of the Wnt signaling pathway. Ubiquitinated by rnf146 when poly-ADP-ribosylated, leading to its degradation and subsequent activation of the Wnt signaling pathway.

It is found in the cytoplasm. The protein localises to the nucleus. It localises to the membrane. The protein resides in the cell membrane. Component of the beta-catenin destruction complex required for regulating ctnnb1 levels through phosphorylation and ubiquitination, and modulating Wnt-signaling. Controls dorsoventral patterning via two opposing effects: down-regulates ctnnb1 to inhibit the Wnt signaling pathway and ventralize embryos, but also dorsalizes embryos by activating a Wnt-independent JNK signaling pathway. The sequence is that of Axin-1 (axin1) from Danio rerio (Zebrafish).